Consider the following 98-residue polypeptide: Large ribosomal subunit protein uL23 (98 aa).

The protein belongs to the universal ribosomal protein uL23 family. Part of the 50S ribosomal subunit. Contacts protein L29, and trigger factor when it is bound to the ribosome.

One of the early assembly proteins it binds 23S rRNA. One of the proteins that surrounds the polypeptide exit tunnel on the outside of the ribosome. Forms the main docking site for trigger factor binding to the ribosome. This Alcanivorax borkumensis (strain ATCC 700651 / DSM 11573 / NCIMB 13689 / SK2) protein is Large ribosomal subunit protein uL23.